The sequence spans 483 residues: Aspartyl/glutamyl-tRNA(Asn/Gln) amidotransferase subunit B (483 aa).

The protein belongs to the GatB/GatE family. GatB subfamily. Heterotrimer of A, B and C subunits.

The catalysed reaction is L-glutamyl-tRNA(Gln) + L-glutamine + ATP + H2O = L-glutaminyl-tRNA(Gln) + L-glutamate + ADP + phosphate + H(+). The enzyme catalyses L-aspartyl-tRNA(Asn) + L-glutamine + ATP + H2O = L-asparaginyl-tRNA(Asn) + L-glutamate + ADP + phosphate + 2 H(+). Functionally, allows the formation of correctly charged Asn-tRNA(Asn) or Gln-tRNA(Gln) through the transamidation of misacylated Asp-tRNA(Asn) or Glu-tRNA(Gln) in organisms which lack either or both of asparaginyl-tRNA or glutaminyl-tRNA synthetases. The reaction takes place in the presence of glutamine and ATP through an activated phospho-Asp-tRNA(Asn) or phospho-Glu-tRNA(Gln). This chain is Aspartyl/glutamyl-tRNA(Asn/Gln) amidotransferase subunit B, found in Rickettsia bellii (strain RML369-C).